The sequence spans 73 residues: Small ribosomal subunit protein bS18c (73 aa).

This sequence belongs to the bacterial ribosomal protein bS18 family. As to quaternary structure, part of the 30S ribosomal subunit.

The protein resides in the plastid. Its subcellular location is the chloroplast. This is Small ribosomal subunit protein bS18c (rps18) from Guillardia theta (Cryptophyte).